The chain runs to 298 residues: N-acetylmuramic acid 6-phosphate etherase (298 aa).

One can recognise an SIS domain in the interval Ile55–Lys218. The active-site Proton donor is the Glu83. The active site involves Glu114.

This sequence belongs to the GCKR-like family. MurNAc-6-P etherase subfamily. As to quaternary structure, homodimer.

It carries out the reaction N-acetyl-D-muramate 6-phosphate + H2O = N-acetyl-D-glucosamine 6-phosphate + (R)-lactate. The protein operates within amino-sugar metabolism; 1,6-anhydro-N-acetylmuramate degradation. It functions in the pathway amino-sugar metabolism; N-acetylmuramate degradation. It participates in cell wall biogenesis; peptidoglycan recycling. Its function is as follows. Specifically catalyzes the cleavage of the D-lactyl ether substituent of MurNAc 6-phosphate, producing GlcNAc 6-phosphate and D-lactate. Together with AnmK, is also required for the utilization of anhydro-N-acetylmuramic acid (anhMurNAc) either imported from the medium or derived from its own cell wall murein, and thus plays a role in cell wall recycling. The polypeptide is N-acetylmuramic acid 6-phosphate etherase (Shigella sonnei (strain Ss046)).